Here is a 747-residue protein sequence, read N- to C-terminus: Kinesin-like protein KIF3B (747 aa).

At Met1 the chain carries N-acetylmethionine. N-acetylserine; in Kinesin-like protein KIF3B, N-terminally processed is present on Ser2. The 332-residue stretch at 9–340 (SVRVVVRCRP…LRYANRAKNI (332 aa)) folds into the Kinesin motor domain. 96–103 (GQTGTGKT) serves as a coordination point for ATP. A coiled-coil region spans residues 346-579 (VNEDPKDALL…EQTQNELTRE (234 aa)). 2 disordered regions span residues 374–412 (IGRRKRREKRREGGGSGGGGEEEEEEGEEGEEDGDDKDD) and 698–747 (IQVD…LVPK). A compositionally biased stretch (acidic residues) spans 393–411 (GEEEEEEGEEGEEDGDDKD). A globular region spans residues 580 to 747 (LKLKHLIIEN…YPQSRGLVPK (168 aa)). Residues 701–710 (DASSFESTAS) are compositionally biased toward polar residues. The segment covering 711 to 721 (RKPKARPKSGR) has biased composition (basic residues). The segment covering 722-735 (KSGSSSSSSGNPAS) has biased composition (low complexity).

This sequence belongs to the TRAFAC class myosin-kinesin ATPase superfamily. Kinesin family. Kinesin II subfamily. In terms of assembly, heterodimer of KIF3A and KIF3B. KIF3A/KIF3B heterodimer interacts with KIFAP3 forming a heterotrimeric (KIF3A/KIF3B/KIFAP3) complex. Interacts with the SMC3 subunit of the cohesin complex. Interacts directly with IFT20. Interacts with FLCN.

It is found in the cytoplasm. The protein resides in the cytoskeleton. The protein localises to the cell projection. Its subcellular location is the cilium. It localises to the dendritic spine. Its function is as follows. Microtubule-based molecular motor that transport intracellular cargos, such as vesicles, organelles and protein complexes. Uses ATP hydrolysis to generate force to bind and move along the microtubule. Plays a role in cilia formation. Involved in photoreceptor integrity and opsin trafficking in rod photoreceptors. Transports vesicles containing N-methyl-D-aspartate (NMDA) receptor subunit GRIN2A into neuronal dendrites. The sequence is that of Kinesin-like protein KIF3B from Mus musculus (Mouse).